A 377-amino-acid chain; its full sequence is Pyruvate dehydrogenase E1 component subunit alpha, mitochondrial (377 aa).

The transit peptide at 1–26 (MLSNFLKVNSKALGHIRTFASKSGEI) directs the protein to the mitochondrion. The pyruvate site is built by H83, Y109, R110, G156, V158, D187, G188, A189, N216, and Y218. 8 residues coordinate thiamine diphosphate: Y109, R110, G156, V158, D187, G188, A189, and N216. D187 contacts Mg(2+). Mg(2+) contacts are provided by N216 and Y218. H283 lines the thiamine diphosphate pocket.

Tetramer of 2 alpha and 2 beta subunits. Thiamine diphosphate is required as a cofactor. Requires Mg(2+) as cofactor.

The protein localises to the mitochondrion matrix. It carries out the reaction N(6)-[(R)-lipoyl]-L-lysyl-[protein] + pyruvate + H(+) = N(6)-[(R)-S(8)-acetyldihydrolipoyl]-L-lysyl-[protein] + CO2. E1 activity is regulated by phosphorylation (inactivation) and dephosphorylation (activation) of the alpha subunit. Functionally, the pyruvate dehydrogenase complex catalyzes the overall conversion of pyruvate to acetyl-CoA and CO(2). It contains multiple copies of three enzymatic components: pyruvate dehydrogenase (E1), dihydrolipoamide acetyltransferase (E2) and lipoamide dehydrogenase (E3). This Dictyostelium discoideum (Social amoeba) protein is Pyruvate dehydrogenase E1 component subunit alpha, mitochondrial (pdhA).